The following is a 308-amino-acid chain: D-alanine--D-alanine ligase (308 aa).

The ATP-grasp domain occupies 102 to 302 (KKVAAAAGIP…FGDLVSWMVE (201 aa)). 128-183 (PLQPPYVVKPVREGSSFGVVIVKEDQSHPPQILTSSEWPFGNQVMVERYIHGRELT) is an ATP binding site. Residues D252, E269, and N271 each contribute to the Mg(2+) site.

This sequence belongs to the D-alanine--D-alanine ligase family. The cofactor is Mg(2+). Requires Mn(2+) as cofactor.

Its subcellular location is the cytoplasm. It catalyses the reaction 2 D-alanine + ATP = D-alanyl-D-alanine + ADP + phosphate + H(+). It functions in the pathway cell wall biogenesis; peptidoglycan biosynthesis. In terms of biological role, cell wall formation. This chain is D-alanine--D-alanine ligase, found in Agrobacterium fabrum (strain C58 / ATCC 33970) (Agrobacterium tumefaciens (strain C58)).